A 937-amino-acid polypeptide reads, in one-letter code: Diacylglycerol kinase theta (937 aa).

Residues 1-48 are disordered; the sequence is MATAAESGARTWPGSGSPRLGSPAGSPVLGISGRARPGSGPERTGRAI. Phosphoserine occurs at positions 22 and 26. 3 Phorbol-ester/DAG-type zinc fingers span residues 54–102, 115–162, and 177–228; these read GHSF…KTPC, AHCF…CSDC, and HHHW…TPEC. The segment at 359–378 is disordered; the sequence is GKAGTTEEETSKDSGPGDSV. A Ras-associating domain is found at 390–489; it reads TQEILKIYPD…TRFYVAEARA (100 aa). 2 short sequence motifs (LXXLL motif) span residues 550-554 and 569-573; these read LYMLA and LPDVL. Residues 579–716 enclose the DAGKc domain; the sequence is PDCCPLLVFV…MDRWTILLDA (138 aa). Residues 911–937 form a disordered region; the sequence is AKQKPRKAGAIRDTRVDTLPAPEGNPL.

This sequence belongs to the eukaryotic diacylglycerol kinase family. Interacts with RHOA (constitutively activated, GTP-bound); the interaction inhibits DGKQ. Interacts with PRKCE. Interacts with PRKCH. Interacts with PLCB1. Interacts with NR5A1; the interaction requires both LXXLL motifs in DGKQ and is required for full phosphatidic acid-mediated activation of NR5A1. Phosphorylated by PRKCE and PRKCH in vitro. Widely expressed with higher expression in the brain and, to a lesser extent, in the small intestine, duodenum, and liver. In brain, expressed in gray matter. Expression is most intense in the cerebellar cortex and hippocampus, while moderate expression is seen in the olfactory bulb neuronal layers and brain stem nuclei. In the cerebellar cortex, equally expressed in both the Purkinje cell somata and the granule cells.

It localises to the cytoplasm. The protein resides in the cytosol. It is found in the cell membrane. Its subcellular location is the synapse. The protein localises to the cytoskeleton. It localises to the nucleus. The protein resides in the nucleus speckle. It is found in the nucleus matrix. The catalysed reaction is a 1,2-diacyl-sn-glycerol + ATP = a 1,2-diacyl-sn-glycero-3-phosphate + ADP + H(+). It catalyses the reaction a 1-O-alkyl-sn-glycerol + ATP = a 1-O-alkyl-sn-glycero-3-phosphate + ADP + H(+). The enzyme catalyses 1-O-alkyl-2-acyl-sn-glycerol + ATP = 1-O-alkyl-2-acyl-sn-glycero-3-phosphate + ADP + H(+). It carries out the reaction 1,2-di-(9Z-octadecenoyl)-sn-glycerol + ATP = 1,2-di-(9Z-octadecenoyl)-sn-glycero-3-phosphate + ADP + H(+). The catalysed reaction is 1-O-hexadecyl-sn-glycerol + ATP = 1-O-hexadecyl-sn-glycero-3-phosphate + ADP + H(+). It catalyses the reaction 1-O-hexadecyl-2-acetyl-sn-glycerol + ATP = 1-O-hexadecyl-2-acetyl-sn-glycero-3-phosphate + ADP + H(+). The enzyme catalyses 1-octadecanoyl-2-(5Z,8Z,11Z,14Z-eicosatetraenoyl)-sn-glycerol + ATP = 1-octadecanoyl-2-(5Z,8Z,11Z,14Z-eicosatetraenoyl)-sn-glycero-3-phosphate + ADP + H(+). Its pathway is lipid metabolism; glycerolipid metabolism. Its activity is regulated as follows. Activated by phosphatidylserine. In terms of biological role, diacylglycerol kinase that converts diacylglycerol/DAG into phosphatidic acid/phosphatidate/PA and regulates the respective levels of these two bioactive lipids. Thereby, acts as a central switch between the signaling pathways activated by these second messengers with different cellular targets and opposite effects in numerous biological processes. Within the adrenocorticotropic hormone signaling pathway, produces phosphatidic acid which in turn activates NR5A1 and subsequent steroidogenic gene transcription. Also functions downstream of the nerve growth factor signaling pathway being specifically activated in the nucleus by the growth factor. Through its diacylglycerol activity also regulates synaptic vesicle endocytosis. The chain is Diacylglycerol kinase theta from Rattus norvegicus (Rat).